Here is a 497-residue protein sequence, read N- to C-terminus: Cytochrome P450 98A8 (497 aa).

The helical transmembrane segment at 2–19 (IIYLISLLPIIVATLMLY) threads the bilayer. Cysteine 431 serves as a coordination point for heme.

The protein belongs to the cytochrome P450 family. Heme serves as cofactor. In terms of tissue distribution, strongly expressed in inflorescence tips, young flower buds, seeds, stamen, tapetum and pollen.

It is found in the membrane. Acts redundantly with CYP98A9 as tricoumaroylspermidine meta-hydroxylase. Also catalyzes the meta-hydroxylation of the three triferuloylspermidine phenolic rings. Unable to use 5-O-(4-coumaroyl) D-quinate or 5-O-(4-coumaroyl) shikimate as substrates. The polypeptide is Cytochrome P450 98A8 (CYP98A8) (Arabidopsis thaliana (Mouse-ear cress)).